The following is a 222-amino-acid chain: MRFEGLIGARILKRINRFAVQIDVEGRTELAHLHDPGRLLEIVYPGNEVLVRRTDGPKLKWRIEFGKINGRYVLIDSGLHSDIARRFLPEGAVPEVRVGRKRIDFRYGDDYIEVKGCTLMANGIAMFPDAPTKRGLEHLKTLETLASSGYRSHVMMIITRDDVRCFYPNFETDPKFAEAFLRLVPAYVKAHFLTFGFDGLYLRYAGSIGLCADVGHGTNGRL.

Belongs to the SfsA family.

This Thermoplasma acidophilum (strain ATCC 25905 / DSM 1728 / JCM 9062 / NBRC 15155 / AMRC-C165) protein is Sugar fermentation stimulation protein homolog.